We begin with the raw amino-acid sequence, 458 residues long: Transmembrane protein 135 (458 aa).

The next 6 helical transmembrane spans lie at 68–88 (ILQS…FFCI), 96–116 (FYSW…AILI), 149–169 (TLRN…MFFF), 298–318 (FQLG…SCFL), 331–351 (IVAG…TISM), and 377–397 (ADTI…VMEV).

This sequence belongs to the TMEM135 family.

The protein localises to the mitochondrion membrane. It localises to the peroxisome membrane. Involved in mitochondrial metabolism by regulating the balance between mitochondrial fusion and fission. May act as a regulator of mitochondrial fission that promotes DNM1L-dependent fission through activation of DNM1L. May be involved in peroxisome organization. This Mus musculus (Mouse) protein is Transmembrane protein 135.